Here is a 121-residue protein sequence, read N- to C-terminus: Group 1 truncated hemoglobin (121 aa).

Met1 carries the N-acetylmethionine modification. His73 is a heme binding site.

It belongs to the truncated hemoglobin family. Group I subfamily. In terms of assembly, monomer. The cofactor is heme.

In Tetrahymena pyriformis, this protein is Group 1 truncated hemoglobin.